We begin with the raw amino-acid sequence, 231 residues long: Ferritin light chain (231 aa).

The signal sequence occupies residues M1 to A19. C23 and C43 are disulfide-bonded. One can recognise a Ferritin-like diiron domain in the interval Y50–I208. Residue N134 is glycosylated (N-linked (GlcNAc...) asparagine).

It belongs to the ferritin family. Oligomer of 12 light (L) chains and 12 heavy (H) chains; L and H chains are disulfide-linked. The functional molecule forms a roughly spherical shell with a diameter of 12 nm and contains a central cavity into which the insoluble ferric iron core is deposited.

The protein localises to the golgi apparatus. It localises to the secreted. Its function is as follows. Stores iron in a soluble, non-toxic, readily available form. Important for iron homeostasis. Iron is taken up in the ferrous form and deposited as ferric hydroxides after oxidation. Ferritin is composed of a heavy (H) chain which is responsible for the oxidation and uptake of ferrous iron, and a light (L) chain which facilitates the nucleation of the ferrihydrite iron core. The polypeptide is Ferritin light chain (Trichoplusia ni (Cabbage looper)).